The primary structure comprises 569 residues: Urease subunit alpha (569 aa).

The 439-residue stretch at 131–569 (GSIDTHIHFI…VPMAQRYFLL (439 aa)) folds into the Urease domain. Residues His-136, His-138, and Lys-219 each coordinate Ni(2+). Lys-219 bears the N6-carboxylysine mark. His-221 contacts substrate. Positions 248 and 274 each coordinate Ni(2+). His-322 (proton donor) is an active-site residue. Asp-362 is a Ni(2+) binding site.

This sequence belongs to the metallo-dependent hydrolases superfamily. Urease alpha subunit family. Heterotrimer of UreA (gamma), UreB (beta) and UreC (alpha) subunits. Three heterotrimers associate to form the active enzyme. Ni cation serves as cofactor. Post-translationally, carboxylation allows a single lysine to coordinate two nickel ions.

Its subcellular location is the cytoplasm. It carries out the reaction urea + 2 H2O + H(+) = hydrogencarbonate + 2 NH4(+). Its pathway is nitrogen metabolism; urea degradation; CO(2) and NH(3) from urea (urease route): step 1/1. The sequence is that of Urease subunit alpha from Prochlorococcus marinus (strain MIT 9301).